Reading from the N-terminus, the 460-residue chain is MASLLQSDRVLYLVQGEKKVRAPLSQLYFCRYCSELRSLECVSHEVDSHYCPSCLENMPSAEAKLKKNRCANCFDCPGCMHTLSTRATSISTQLPDDPAKTTMKKAYYLACGFCRWTSRDVGMADKSVASGGWQEPENPHTQRMNKLIEYYQQLAQKEKVERDRKKLARRRNYMPLAFSDKYGLGTRLQRPRAGASISTLAGLSLKEGEDQKEIKIEPAQAVDEVEPLPEDYYTRPVNLTEVTTLQQRLLQPDFQPVCASQLYPRHKHLLIKRSLRCRKCEHNLSKPEFNPTSIKFKIQLVAVNYIPEVRIMSIPNLRYMKESQVLLTLTNPVENLTHVTLFECEEGDPDDINSTAKVVVPPKELVLAGKDAAAEYDELAEPQDFQDDPDIIAFRKANKVGIFIKVTPQREEGEVTVCFKMKHDFKNLAAPIRPIEESDQGTEVIWLTQHVELSLGPLLP.

N-acetylalanine is present on Ala-2. Residues 152 to 172 are a coiled coil; that stretch reads QQLAQKEKVERDRKKLARRRN. Position 196 is a phosphoserine (Ser-196). A Glycyl lysine isopeptide (Lys-Gly) (interchain with G-Cter in SUMO2) cross-link involves residue Lys-215. Thr-407 is subject to Phosphothreonine.

Belongs to the dynactin subunit 4 family. In terms of assembly, subunit of dynactin, a multiprotein complex part of a tripartite complex with dynein and a adapter, such as BICDL1, BICD2 or HOOK3. The dynactin complex is built around ACTR1A/ACTB filament and consists of an actin-related filament composed of a shoulder domain, a pointed end and a barbed end. Its length is defined by its flexible shoulder domain. The soulder is composed of 2 DCTN1 subunits, 4 DCTN2 and 2 DCTN3. The 4 DCNT2 (via N-terminus) bind the ACTR1A filament and act as molecular rulers to determine the length. The pointed end is important for binding dynein-dynactin cargo adapters. Consists of 4 subunits: ACTR10, DCNT4, DCTN5 and DCTN6. The barbed end is composed of a CAPZA1:CAPZB heterodimers, which binds ACTR1A/ACTB filament and dynactin and stabilizes dynactin. Interacts with ATP7B, but not ATP7A, in a copper-dependent manner. Interacts with ANK2; this interaction is required for localization at costameres. Interacts with N4BP2L1.

The protein resides in the cytoplasm. It is found in the cytoskeleton. The protein localises to the microtubule organizing center. Its subcellular location is the centrosome. It localises to the stress fiber. The protein resides in the cell cortex. It is found in the myofibril. The protein localises to the sarcomere. Part of the dynactin complex that activates the molecular motor dynein for ultra-processive transport along microtubules. This chain is Dynactin subunit 4, found in Homo sapiens (Human).